Here is a 282-residue protein sequence, read N- to C-terminus: Probable endonuclease 4 (282 aa).

Zn(2+) contacts are provided by histidine 69, histidine 109, glutamate 145, aspartate 179, histidine 182, histidine 216, aspartate 229, histidine 231, and glutamate 261.

This sequence belongs to the AP endonuclease 2 family. The cofactor is Zn(2+).

The catalysed reaction is Endonucleolytic cleavage to 5'-phosphooligonucleotide end-products.. Functionally, endonuclease IV plays a role in DNA repair. It cleaves phosphodiester bonds at apurinic or apyrimidinic (AP) sites, generating a 3'-hydroxyl group and a 5'-terminal sugar phosphate. The chain is Probable endonuclease 4 from Campylobacter hominis (strain ATCC BAA-381 / DSM 21671 / CCUG 45161 / LMG 19568 / NCTC 13146 / CH001A).